Here is a 463-residue protein sequence, read N- to C-terminus: Elongation factor 1-alpha (463 aa).

Residues 5 to 242 (KVHINIVVIG…DSIIPPQRPT (238 aa)) form the tr-type G domain. A G1 region spans residues 14–21 (GHVDSGKS). 14–21 (GHVDSGKS) contacts GTP. A G2 region spans residues 70–74 (GITID). A G3 region spans residues 91–94 (DAPG). GTP contacts are provided by residues 91–95 (DAPGH) and 153–156 (NKMD). A G4 region spans residues 153–156 (NKMD). The interval 194–196 (SGF) is G5. 5-glutamyl glycerylphosphorylethanolamine is present on residues E301 and E374. Residues 443 to 463 (KSDGSSGKVTKSAQKAAPKKK) are disordered. Residues 446-455 (GSSGKVTKSA) show a composition bias toward polar residues.

The protein belongs to the TRAFAC class translation factor GTPase superfamily. Classic translation factor GTPase family. EF-Tu/EF-1A subfamily.

It localises to the cytoplasm. Its function is as follows. This protein promotes the GTP-dependent binding of aminoacyl-tRNA to the A-site of ribosomes during protein biosynthesis. This Caenorhabditis elegans protein is Elongation factor 1-alpha.